The sequence spans 203 residues: Protein shisa-like-1a (203 aa).

Residues 1 to 25 (MIMNGRWSFNTLAIIFILLSTAALS) form the signal peptide. The Extracellular segment spans residues 26 to 97 (AHFRVCEPYS…SDSFAHNNYT (72 aa)). N-linked (GlcNAc...) asparagine glycans are attached at residues Asn53, Asn63, Asn72, Asn83, and Asn95. A helical transmembrane segment spans residues 98 to 118 (ALIGVWIYGFFVMVLLALDFL). Topologically, residues 119–203 (YYSAMNYELC…LLSFQTSTAW (85 aa)) are cytoplasmic. Positions 157–191 (ELNTGPGLSQQQQLHLHHHHHHHHPRHSLRGDTQS) are disordered. Positions 161–170 (GPGLSQQQQL) are enriched in low complexity. Residues 171 to 184 (HLHHHHHHHHPRHS) are compositionally biased toward basic residues.

The protein belongs to the shisa family.

It is found in the membrane. The chain is Protein shisa-like-1a (shisal1a) from Danio rerio (Zebrafish).